The sequence spans 204 residues: uncharacterized protein (204 aa).

A disordered region spans residues 47 to 108 (TDSSDDEGGA…EDSDEEGEGG (62 aa)). Residues 49–106 (SSDDEGGASSGDEGEASSDDEGDASSDDEEEASSDGEGVVEDEETLDAEGEDSDEEGE) are compositionally biased toward acidic residues.

The protein resides in the mitochondrion. This is an uncharacterized protein from Paramecium tetraurelia.